The primary structure comprises 55 residues: Methylmalonyl-CoA decarboxylase subunit epsilon (55 aa).

The methylmalonyl-CoA decarboxylase is composed of five subunits: the carboxyltransferase alpha subunit (MmdA), the tunnel beta subunit (MmdB), the biotin-containing gamma subunit (MmdC), and the delta (MmdD) and epsilon (MmdE) subunits.

Its subcellular location is the cell membrane. It catalyses the reaction (S)-methylmalonyl-CoA + Na(+)(in) + H(+)(out) = propanoyl-CoA + Na(+)(out) + CO2. Its activity is regulated as follows. Completely inhibited by avidin. In terms of biological role, subunit of the sodium ion pump methylmalonyl-CoA decarboxylase, which converts the chemical energy of a decarboxylation reaction into an electrochemical gradient of Na(+) ions across the cytoplasmic membrane, thereby creating a sodium ion motive force that is used for ATP synthesis. The epsilon subunit seems not important for the catalysis of either decarboxylation or Na(+) transport, but it improves binding of the alpha subunit and plays an important role in stabilizing the methylmalonyl-CoA-decarboxylase enzyme complex. Can also convert malonyl-CoA into acetyl-CoA. This chain is Methylmalonyl-CoA decarboxylase subunit epsilon, found in Veillonella parvula (Staphylococcus parvulus).